A 439-amino-acid polypeptide reads, in one-letter code: Trigger factor (439 aa).

Residues 162-247 (GDRLTLDFIG…LKKVEAMILP (86 aa)) form the PPIase FKBP-type domain.

It belongs to the FKBP-type PPIase family. Tig subfamily.

The protein resides in the cytoplasm. It catalyses the reaction [protein]-peptidylproline (omega=180) = [protein]-peptidylproline (omega=0). In terms of biological role, involved in protein export. Acts as a chaperone by maintaining the newly synthesized protein in an open conformation. Functions as a peptidyl-prolyl cis-trans isomerase. The protein is Trigger factor of Dichelobacter nodosus (strain VCS1703A).